Here is a 468-residue protein sequence, read N- to C-terminus: ATP synthase subunit beta (468 aa).

Position 155 to 162 (155 to 162) interacts with ATP; that stretch reads GGAGVGKT.

It belongs to the ATPase alpha/beta chains family. In terms of assembly, F-type ATPases have 2 components, CF(1) - the catalytic core - and CF(0) - the membrane proton channel. CF(1) has five subunits: alpha(3), beta(3), gamma(1), delta(1), epsilon(1). CF(0) has three main subunits: a(1), b(2) and c(9-12). The alpha and beta chains form an alternating ring which encloses part of the gamma chain. CF(1) is attached to CF(0) by a central stalk formed by the gamma and epsilon chains, while a peripheral stalk is formed by the delta and b chains.

It localises to the cell membrane. It catalyses the reaction ATP + H2O + 4 H(+)(in) = ADP + phosphate + 5 H(+)(out). Produces ATP from ADP in the presence of a proton gradient across the membrane. The catalytic sites are hosted primarily by the beta subunits. The polypeptide is ATP synthase subunit beta (Streptococcus pyogenes serotype M49 (strain NZ131)).